The sequence spans 920 residues: Puromycin-sensitive aminopeptidase (920 aa).

Substrate is bound by residues Glu-181 and Gly-317–Asn-321. His-353 contacts Zn(2+). The Proton acceptor role is filled by Glu-354. Zn(2+)-binding residues include His-357 and Glu-376. 3'-nitrotyrosine is present on Tyr-465. The Nuclear localization signal signature appears at Arg-727–Lys-731.

It belongs to the peptidase M1 family. In terms of assembly, monomer. Zn(2+) is required as a cofactor. Widely expressed. Highest expression in brain, particularly the striatum and hippocampus. Expressed in Sertoli cells.

Its subcellular location is the cytoplasm. It is found in the cytosol. The protein localises to the nucleus. The catalysed reaction is Release of an N-terminal amino acid, preferentially alanine, from a wide range of peptides, amides and arylamides.. Strongly inhibited by bestatin, leuhistin, actinonin, amastatin, 1,10-phenanthroline, DFP, PCMBS, Zn(2+), Cd(2+), Co(2+), Cu(2+), Hg(2+), EDTA and puromycin. Not inhibited by PMSF, and only slightly inhibited by leupeptin and aprotinin. Activity is increased by Mg(2+) and Ca(2+). In terms of biological role, aminopeptidase with broad substrate specificity for several peptides. Involved in proteolytic events essential for cell growth and viability. May act as regulator of neuropeptide activity. Plays a role in the antigen-processing pathway for MHC class I molecules. Involved in the N-terminal trimming of cytotoxic T-cell epitope precursors. Digests the poly-Q peptides found in many cellular proteins. The polypeptide is Puromycin-sensitive aminopeptidase (Npepps) (Mus musculus (Mouse)).